Reading from the N-terminus, the 307-residue chain is MSSDSNAKPLPFIYQFISGAVAGISELTVMYPLDVVKTRFQLEVTTPTAAAVGKQVERYNGVIDCLKKIVKKEGFSRLYRGISSPMLMEAPKRATKFACNDQYQKIFKNLFNTNETTQKISIAAGASAGMTEAAVIVPFELIKIRMQDVKSSYLGPMDCLKKTIKNEGIMGLYKGIESTMWRNALWNGGYFGVIYQVRNSMPVAKTKGQKTRNDLIAGAIGGTVGTMLNTPFDVVKSRIQSVDAVSSAVKKYNWCLPSLLVIYREEGFRALYKGFVPKVCRLAPGGSLMLVVFTGMMNFFRDLKYGH.

Transmembrane regions (helical) follow at residues 10 to 30 (LPFIYQFISGAVAGISELTVM), 76 to 95 (SRLYRGISSPMLMEAPKRAT), 122 to 142 (IAAGASAGMTEAAVIVPFELI), 171 to 191 (GLYKGIESTMWRNALWNGGYF), 215 to 235 (LIAGAIGGTVGTMLNTPFDVV), and 280 to 300 (CRLAPGGSLMLVVFTGMMNFF). 3 Solcar repeats span residues 10-106 (LPFI…YQKI), 116-200 (TTQK…VRNS), and 209-299 (QKTR…MMNF).

This sequence belongs to the mitochondrial carrier (TC 2.A.29) family.

Its subcellular location is the mitochondrion inner membrane. In terms of biological role, transports C5-C7 oxodicarboxylates across the inner membranes of mitochondria. Can transport 2-oxoadipate, 2-oxoglutarate, adipate, glutarate, 2-oxopimelate, oxaloacetate, citrate and malate. The main physiological role is probably to supply 2-oxoadipate and 2-oxoglutarate from the mitochondrial matrix to the cytosol where they are used in the biosynthesis of lysine and glutamate, respectively, and in lysine catabolism. The polypeptide is Mitochondrial 2-oxodicarboxylate carrier 2 (ODC2) (Saccharomyces cerevisiae (strain ATCC 204508 / S288c) (Baker's yeast)).